A 188-amino-acid polypeptide reads, in one-letter code: Der GTPase-activating protein YihI (188 aa).

Disordered stretches follow at residues 1-80 and 162-188; these read MKQP…VPVP and DEDDVEREEKQEDILQLLKRGNPKDTF. Positions 27 to 37 are enriched in basic and acidic residues; sequence TRDELDAEARD. Positions 47-57 are enriched in polar residues; it reads NRSGARTNVEG.

The protein belongs to the YihI family. In terms of assembly, interacts with Der.

A GTPase-activating protein (GAP) that modifies Der/EngA GTPase function. May play a role in ribosome biogenesis. This is Der GTPase-activating protein YihI from Yersinia pseudotuberculosis serotype O:1b (strain IP 31758).